The sequence spans 238 residues: Ribosomal RNA small subunit methyltransferase G (238 aa).

Residues glycine 106, leucine 111, 157 to 158 (IE), and arginine 170 contribute to the S-adenosyl-L-methionine site.

Belongs to the methyltransferase superfamily. RNA methyltransferase RsmG family.

Its subcellular location is the cytoplasm. It carries out the reaction guanosine(527) in 16S rRNA + S-adenosyl-L-methionine = N(7)-methylguanosine(527) in 16S rRNA + S-adenosyl-L-homocysteine. Specifically methylates the N7 position of guanine in position 527 of 16S rRNA. This is Ribosomal RNA small subunit methyltransferase G from Psychrobacter arcticus (strain DSM 17307 / VKM B-2377 / 273-4).